The primary structure comprises 396 residues: L-lactate dehydrogenase (396 aa).

The FMN hydroxy acid dehydrogenase domain maps to 1–380; the sequence is MIISAASDYR…SGDSLVQELG (380 aa). Tyrosine 24 contributes to the substrate binding site. FMN is bound by residues serine 106 and glutamine 127. Residue tyrosine 129 coordinates substrate. Threonine 155 is an FMN binding site. A substrate-binding site is contributed by arginine 164. Lysine 251 contacts FMN. The Proton acceptor role is filled by histidine 275. Arginine 278 is a substrate binding site. Residue 306–330 participates in FMN binding; the sequence is DSGIRNGLDVVRMIALGADTVLLGR.

This sequence belongs to the FMN-dependent alpha-hydroxy acid dehydrogenase family. FMN is required as a cofactor.

Its subcellular location is the cell inner membrane. It catalyses the reaction (S)-lactate + A = pyruvate + AH2. In terms of biological role, catalyzes the conversion of L-lactate to pyruvate. Is coupled to the respiratory chain. The sequence is that of L-lactate dehydrogenase from Salmonella arizonae (strain ATCC BAA-731 / CDC346-86 / RSK2980).